The chain runs to 376 residues: 4-hydroxy-3-methylbut-2-en-1-yl diphosphate synthase (flavodoxin) (376 aa).

C272, C275, C307, and E314 together coordinate [4Fe-4S] cluster.

This sequence belongs to the IspG family. [4Fe-4S] cluster is required as a cofactor.

The catalysed reaction is (2E)-4-hydroxy-3-methylbut-2-enyl diphosphate + oxidized [flavodoxin] + H2O + 2 H(+) = 2-C-methyl-D-erythritol 2,4-cyclic diphosphate + reduced [flavodoxin]. It participates in isoprenoid biosynthesis; isopentenyl diphosphate biosynthesis via DXP pathway; isopentenyl diphosphate from 1-deoxy-D-xylulose 5-phosphate: step 5/6. In terms of biological role, converts 2C-methyl-D-erythritol 2,4-cyclodiphosphate (ME-2,4cPP) into 1-hydroxy-2-methyl-2-(E)-butenyl 4-diphosphate. This Blochmanniella pennsylvanica (strain BPEN) protein is 4-hydroxy-3-methylbut-2-en-1-yl diphosphate synthase (flavodoxin).